We begin with the raw amino-acid sequence, 130 residues long: Phosphomevalonate dehydratase small subunit (130 aa).

The active-site Proton acceptor is the serine 62.

The protein belongs to the AcnX type II small subunit family. As to quaternary structure, heterodimer composed of a large subunit (PMDh-L) and a small subunit (PMDh-S).

It carries out the reaction (R)-5-phosphomevalonate = (2E)-3-methyl-5-phosphooxypent-2-enoate + H2O. Its pathway is isoprenoid biosynthesis; isopentenyl diphosphate biosynthesis via mevalonate pathway. In terms of biological role, component of a hydro-lyase that catalyzes the dehydration of mevalonate 5-phosphate (MVA5P) to form trans-anhydromevalonate 5-phosphate (tAHMP). Involved in the archaeal mevalonate (MVA) pathway, which provides fundamental precursors for isoprenoid biosynthesis, such as isopentenyl diphosphate (IPP) and dimethylallyl diphosphate (DMAPP). The protein is Phosphomevalonate dehydratase small subunit of Thermococcus sibiricus (strain DSM 12597 / MM 739).